Reading from the N-terminus, the 151-residue chain is uncharacterized protein (151 aa).

Positions 123 to 151 (PAGQNAGTGPAQKLKTDETRCYERRGGSQ) are disordered. The span at 136–151 (LKTDETRCYERRGGSQ) shows a compositional bias: basic and acidic residues.

This is an uncharacterized protein from Triticum aestivum (Wheat).